The chain runs to 284 residues: Small ribosomal subunit protein uS5 (284 aa).

Residues 1 to 10 (MMADEKKTPE) show a composition bias toward basic and acidic residues. The tract at residues 1 to 105 (MMADEKKTPE…DNRRGGRREE (105 aa)) is disordered. Over residues 14–23 (ETATPAVAVE) the composition is skewed to low complexity. A compositionally biased stretch (basic and acidic residues) spans 24–43 (DALKAEPTETLEAQKAKAEA). Over residues 44 to 67 (ETPAVAETPSEAAANQSAAQGAEG) the composition is skewed to low complexity. The span at 68 to 105 (QPRERGGHDRGGRGGRGGNDRGRGRGGRDNRRGGRREE) shows a compositional bias: basic and acidic residues. Residues 110–173 (IIEKLVHINR…AAARKKMIRV (64 aa)) enclose the S5 DRBM domain. The interval 246 to 284 (DQTSPKSVAQRRGKKVADLLGRGGASEAEAEADAAAIAE) is disordered.

Belongs to the universal ribosomal protein uS5 family. Part of the 30S ribosomal subunit. Contacts proteins S4 and S8.

Functionally, with S4 and S12 plays an important role in translational accuracy. Located at the back of the 30S subunit body where it stabilizes the conformation of the head with respect to the body. In Erythrobacter litoralis (strain HTCC2594), this protein is Small ribosomal subunit protein uS5.